Reading from the N-terminus, the 1030-residue chain is Alpha-L-rhamnosidase (1030 aa).

The segment at 133 to 297 is carbohydrate-binding module-67 (CBM67); that stretch reads PSLEGSSWIW…GAGPWGRVAP (165 aa). D179 and N180 together coordinate Ca(2+). Residues 179 to 180 and W203 each bind alpha-L-rhamnose; that span reads DN. 2 residues coordinate Ca(2+): N228 and P233. Residues D630, 634 to 636, D643, and W695 each bind alpha-L-rhamnose; that span reads RDE. E636 functions as the Proton donor in the catalytic mechanism. E895 functions as the Proton acceptor in the catalytic mechanism. Residue H916 participates in alpha-L-rhamnose binding.

Belongs to the glycosyl hydrolase 78 family.

The enzyme catalyses Hydrolysis of terminal non-reducing alpha-L-rhamnose residues in alpha-L-rhamnosides.. Alpha-L-rhamnosidase which is able to degrade p-nitrophenyl-alpha-L-rhamnopyranoside (PNP-Rha) in vitro. Releases L-rhamnose from citrus flavonoids such as naringin, rutin and hesperidin, and the arabinogalactan-protein (AGP) gum arabic. AGPs are a family of proteoglycans that are localized on the cell surfaces of higher plants. Cleaves both the alpha-1,6 and the alpha-1,2-linked rhamnosyl residues. In Streptomyces avermitilis (strain ATCC 31267 / DSM 46492 / JCM 5070 / NBRC 14893 / NCIMB 12804 / NRRL 8165 / MA-4680), this protein is Alpha-L-rhamnosidase.